Here is a 799-residue protein sequence, read N- to C-terminus: 1,4-alpha-glucan-branching enzyme 2, chloroplastic/amyloplastic (799 aa).

The transit peptide at 1–57 (MAFRVSGAVLGGAVRAPRLTGGGEGSLVFRHTGLFLTRGARVGCSGTHGAMRAAAAA) directs the protein to the chloroplast. (1,4-alpha-D-glucosyl)n contacts are provided by W196 and K232. The active-site Nucleophile is D447. The active-site Proton donor is E502.

This sequence belongs to the glycosyl hydrolase 13 family. GlgB subfamily. As to quaternary structure, monomer.

The protein resides in the plastid. Its subcellular location is the chloroplast. It localises to the amyloplast. The enzyme catalyses Transfers a segment of a (1-&gt;4)-alpha-D-glucan chain to a primary hydroxy group in a similar glucan chain.. Its pathway is glycan biosynthesis; starch biosynthesis. Its function is as follows. Catalyzes the formation of the alpha-1,6-glucosidic linkages in starch by scission of a 1,4-alpha-linked oligosaccharide from growing alpha-1,4-glucan chains and the subsequent attachment of the oligosaccharide to the alpha-1,6 position. This chain is 1,4-alpha-glucan-branching enzyme 2, chloroplastic/amyloplastic (SBE1), found in Zea mays (Maize).